A 269-amino-acid polypeptide reads, in one-letter code: Diaminopimelate epimerase (269 aa).

Positions 15, 49, and 66 each coordinate substrate. Cys-75 acts as the Proton donor in catalysis. Residues Gly-76–Asn-77, Asn-155, Asn-187, and Glu-204–Arg-205 contribute to the substrate site. The active-site Proton acceptor is the Cys-213. Residue Gly-214 to Ser-215 coordinates substrate.

The protein belongs to the diaminopimelate epimerase family. As to quaternary structure, homodimer.

Its subcellular location is the cytoplasm. The catalysed reaction is (2S,6S)-2,6-diaminopimelate = meso-2,6-diaminopimelate. The protein operates within amino-acid biosynthesis; L-lysine biosynthesis via DAP pathway; DL-2,6-diaminopimelate from LL-2,6-diaminopimelate: step 1/1. Functionally, catalyzes the stereoinversion of LL-2,6-diaminopimelate (L,L-DAP) to meso-diaminopimelate (meso-DAP), a precursor of L-lysine and an essential component of the bacterial peptidoglycan. The polypeptide is Diaminopimelate epimerase (Rickettsia canadensis (strain McKiel)).